The chain runs to 300 residues: Ribosomal protein L11 methyltransferase (300 aa).

Positions 152, 173, 195, and 234 each coordinate S-adenosyl-L-methionine.

The protein belongs to the methyltransferase superfamily. PrmA family.

The protein localises to the cytoplasm. It carries out the reaction L-lysyl-[protein] + 3 S-adenosyl-L-methionine = N(6),N(6),N(6)-trimethyl-L-lysyl-[protein] + 3 S-adenosyl-L-homocysteine + 3 H(+). Methylates ribosomal protein L11. The polypeptide is Ribosomal protein L11 methyltransferase (Burkholderia orbicola (strain MC0-3)).